The sequence spans 683 residues: Protein kinase C eta type (683 aa).

Positions 1 to 118 constitute a C2 domain; sequence MSSGTMKFNG…LRTAGTSDTF (118 aa). 2 positions are modified to phosphoserine: Ser28 and Ser32. 2 consecutive Phorbol-ester/DAG-type zinc fingers follow at residues 171-222 and 245-295; these read GHKF…VTAC and PHKF…APNC. Ser317 is modified (phosphoserine). The 260-residue stretch at 355 to 614 folds into the Protein kinase domain; that stretch reads FEFIRVLGKG…EHEILRHPFF (260 aa). Residues 361–369 and Lys384 each bind ATP; that span reads LGKGSFGKV. Asp479 (proton acceptor) is an active-site residue. Thr513 bears the Phosphothreonine; by PDPK1 mark. An AGC-kinase C-terminal domain is found at 615–683; that stretch reads KEIDWAQLNH…FSYVSPELQL (69 aa). Phosphothreonine is present on Thr656. Ser675 carries the phosphoserine modification.

Belongs to the protein kinase superfamily. AGC Ser/Thr protein kinase family. PKC subfamily. In terms of assembly, interacts with FYN. Interacts with RALA. Interacts with DGKQ. As to expression, predominantly expressed in lung and skin.

It localises to the cytoplasm. The enzyme catalyses L-seryl-[protein] + ATP = O-phospho-L-seryl-[protein] + ADP + H(+). It catalyses the reaction L-threonyl-[protein] + ATP = O-phospho-L-threonyl-[protein] + ADP + H(+). Novel PKCs (PRKCD, PRKCE, PRKCH and PRKCQ) are calcium-insensitive, but activated by diacylglycerol (DAG) and phosphatidylserine. Three specific sites; Thr-513 (activation loop of the kinase domain), Thr-656 (turn motif) and Ser-675 (hydrophobic region), need to be phosphorylated for its full activation. Calcium-independent, phospholipid- and diacylglycerol (DAG)-dependent serine/threonine-protein kinase that is involved in the regulation of cell differentiation in keratinocytes and pre-B cell receptor, mediates regulation of epithelial tight junction integrity and foam cell formation, and is required for glioblastoma proliferation and apoptosis prevention in MCF-7 cells. In keratinocytes, binds and activates the tyrosine kinase FYN, which in turn blocks epidermal growth factor receptor (EGFR) signaling and leads to keratinocyte growth arrest and differentiation. Associates with the cyclin CCNE1-CDK2-CDKN1B complex and inhibits CDK2 kinase activity, leading to RB1 dephosphorylation and thereby G1 arrest in keratinocytes. In association with RALA activates actin depolymerization, which is necessary for keratinocyte differentiation. In the pre-B cell receptor signaling, functions downstream of BLNK by up-regulating IRF4, which in turn activates L chain gene rearrangement. Regulates epithelial tight junctions (TJs) by phosphorylating occludin (OCLN) on threonine residues, which is necessary for the assembly and maintenance of TJs. In association with PLD2 and via TLR4 signaling, is involved in lipopolysaccharide (LPS)-induced RGS2 down-regulation and foam cell formation. Upon PMA stimulation, mediates glioblastoma cell proliferation by activating the mTOR pathway, the PI3K/AKT pathway and the ERK1-dependent phosphorylation of ELK1. Involved in the protection of glioblastoma cells from irradiation-induced apoptosis by preventing caspase-9 activation. In camptothecin-treated MCF-7 cells, regulates NF-kappa-B upstream signaling by activating IKBKB, and confers protection against DNA damage-induced apoptosis. Promotes oncogenic functions of ATF2 in the nucleus while blocking its apoptotic function at mitochondria. Phosphorylates ATF2 which promotes its nuclear retention and transcriptional activity and negatively regulates its mitochondrial localization. This chain is Protein kinase C eta type (Prkch), found in Mus musculus (Mouse).